Reading from the N-terminus, the 1157-residue chain is Cyclin-dependent kinase 12 (1157 aa).

The disordered stretch occupies residues 15 to 540 (SDVSSEDFSD…RSPTSRDLKH (526 aa)). Residues 18–32 (SSEDFSDQEAGDLDA) show a composition bias toward acidic residues. Basic and acidic residues predominate over residues 55 to 76 (GRLDAKPDKEGYDNYRSRRAED). Positions 85-94 (SRQTSSSEAT) are enriched in polar residues. The residue at position 106 (Thr-106) is a Phosphothreonine. Basic residues predominate over residues 134 to 162 (RQKRKKQKKEKHKHKSKKKSKKRKKKRAK). The segment covering 163–176 (SYSSIDSMSDNDIN) has biased composition (low complexity). The residue at position 184 (Thr-184) is a Phosphothreonine. Residues 189 to 215 (PSKSNERTVSAAPSSFTPHNLKESSSP) are compositionally biased toward polar residues. Residues Ser-190 and Ser-192 each carry the phosphoserine modification. Thr-217 bears the Phosphothreonine mark. Residues 224 to 255 (PNTNSNYYGESSLETANSALGSNLQVTVTNKQ) are compositionally biased toward polar residues. Positions 256-281 (SISNRLRSPPPSSRSSGNGPRFGNSP) are enriched in low complexity. The residue at position 280 (Ser-280) is a Phosphoserine. The residue at position 283 (Thr-283) is a Phosphothreonine. Ser-291, Ser-301, and Ser-314 each carry phosphoserine. Over residues 315-332 (PHKEDVSAHHRSSHDHGY) the composition is skewed to basic and acidic residues. Ser-353 is modified (phosphoserine). Thr-365 carries the phosphothreonine modification. The segment covering 392-403 (GKYERYSRDRYS) has biased composition (basic and acidic residues). The segment covering 408–422 (RSPSVQHSRSRQSPS) has biased composition (low complexity). A compositionally biased stretch (polar residues) spans 444–468 (TTVSSTPSHTTRTSKRASGTGTSGD). The segment covering 473-484 (SPRTSSRYMESS) has biased composition (low complexity). Phosphoserine occurs at positions 487 and 492. Basic residues predominate over residues 495–508 (HHYHHRRSPRMRQR). The span at 518-533 (PSSASSESSASRSRSP) shows a compositional bias: low complexity. Phosphoserine is present on Ser-553. Disordered regions lie at residues 574 to 661 (ERQE…ADVP) and 675 to 782 (PFSA…QRPV). The span at 586 to 603 (GALTINDNSSSVDGNTPN) shows a compositional bias: polar residues. Residues 609–623 (SAPGSGTPAAASTTS) are compositionally biased toward low complexity. Composition is skewed to polar residues over residues 644–656 (NKQN…NPAS) and 721–731 (VTSSGSANKSV). A phosphoserine mark is found at Ser-730, Ser-743, Ser-747, and Ser-755. A compositionally biased stretch (acidic residues) spans 746–760 (LSGDDDVIDSPEDFD). The region spanning 804–1098 (FEMIAQIGEG…AEDALRSPWL (295 aa)) is the Protein kinase domain. Residues 810-818 (IGEGTYGQV), Lys-833, and 891-896 (EYMDHD) contribute to the ATP site. The Proton acceptor role is filled by Asp-936. Residue His-1118 participates in ATP binding.

It belongs to the protein kinase superfamily. CMGC Ser/Thr protein kinase family. CDC2/CDKX subfamily. Interacts with cyclin CycK.

Its subcellular location is the nucleus. The protein resides in the chromosome. The enzyme catalyses [DNA-directed RNA polymerase] + ATP = phospho-[DNA-directed RNA polymerase] + ADP + H(+). It carries out the reaction L-seryl-[protein] + ATP = O-phospho-L-seryl-[protein] + ADP + H(+). It catalyses the reaction L-threonyl-[protein] + ATP = O-phospho-L-threonyl-[protein] + ADP + H(+). Cyclin-dependent kinase which displays CTD kinase activity: hyperphosphorylates the C-terminal heptapeptide repeat domain (CTD) of the largest RNA polymerase II subunit, thereby acting as a key regulator of transcription elongation. The polypeptide is Cyclin-dependent kinase 12 (Cdk12) (Drosophila melanogaster (Fruit fly)).